The following is a 186-amino-acid chain: Probable chorismate pyruvate-lyase (186 aa).

Positions 80, 118, and 170 each coordinate substrate.

This sequence belongs to the UbiC family.

Its subcellular location is the cytoplasm. The catalysed reaction is chorismate = 4-hydroxybenzoate + pyruvate. It functions in the pathway cofactor biosynthesis; ubiquinone biosynthesis. Removes the pyruvyl group from chorismate, with concomitant aromatization of the ring, to provide 4-hydroxybenzoate (4HB) for the ubiquinone pathway. The polypeptide is Probable chorismate pyruvate-lyase (Pseudomonas syringae pv. syringae (strain B728a)).